The primary structure comprises 199 residues: Ribonuclease HII (199 aa).

Positions 10-199 (RIEAGCDEAG…LLPEQLTLGF (190 aa)) constitute an RNase H type-2 domain. Positions 16, 17, and 108 each coordinate a divalent metal cation.

This sequence belongs to the RNase HII family. The cofactor is Mn(2+). Requires Mg(2+) as cofactor.

It is found in the cytoplasm. The catalysed reaction is Endonucleolytic cleavage to 5'-phosphomonoester.. Functionally, endonuclease that specifically degrades the RNA of RNA-DNA hybrids. The sequence is that of Ribonuclease HII from Parabacteroides distasonis (strain ATCC 8503 / DSM 20701 / CIP 104284 / JCM 5825 / NCTC 11152).